Reading from the N-terminus, the 319-residue chain is Probable arabinan endo-1,5-alpha-L-arabinosidase A (319 aa).

The N-terminal stretch at 1-19 (MYLQSSLALVLLRAAVVHG) is a signal peptide. Asp-34 functions as the Proton acceptor in the catalytic mechanism. N-linked (GlcNAc...) asparagine glycosylation occurs at Asn-53. The active-site Proton donor is Glu-198.

Belongs to the glycosyl hydrolase 43 family.

The protein resides in the secreted. It catalyses the reaction Endohydrolysis of (1-&gt;5)-alpha-arabinofuranosidic linkages in (1-&gt;5)-arabinans.. It participates in glycan metabolism; L-arabinan degradation. Its function is as follows. Endo-1,5-alpha-L-arabinanase involved in degradation of pectin. Its preferred substrate is linear 1,5-alpha-L-arabinan. The protein is Probable arabinan endo-1,5-alpha-L-arabinosidase A (abnA) of Aspergillus flavus (strain ATCC 200026 / FGSC A1120 / IAM 13836 / NRRL 3357 / JCM 12722 / SRRC 167).